Reading from the N-terminus, the 138-residue chain is Aspartate 1-decarboxylase (138 aa).

The Schiff-base intermediate with substrate; via pyruvic acid role is filled by S25. Position 25 is a pyruvic acid (Ser) (S25). T57 serves as a coordination point for substrate. Y58 serves as the catalytic Proton donor. Position 73–75 (73–75 (GAA)) interacts with substrate. Residues 117-138 (VDADPTAPPAPGLERSPLAEPV) are disordered.

It belongs to the PanD family. Heterooctamer of four alpha and four beta subunits. It depends on pyruvate as a cofactor. In terms of processing, is synthesized initially as an inactive proenzyme, which is activated by self-cleavage at a specific serine bond to produce a beta-subunit with a hydroxyl group at its C-terminus and an alpha-subunit with a pyruvoyl group at its N-terminus.

Its subcellular location is the cytoplasm. It catalyses the reaction L-aspartate + H(+) = beta-alanine + CO2. It functions in the pathway cofactor biosynthesis; (R)-pantothenate biosynthesis; beta-alanine from L-aspartate: step 1/1. Its function is as follows. Catalyzes the pyruvoyl-dependent decarboxylation of aspartate to produce beta-alanine. The sequence is that of Aspartate 1-decarboxylase from Clavibacter michiganensis subsp. michiganensis (strain NCPPB 382).